A 95-amino-acid chain; its full sequence is Protein TusB (95 aa).

Belongs to the DsrH/TusB family. Heterohexamer, formed by a dimer of trimers. The hexameric TusBCD complex contains 2 copies each of TusB, TusC and TusD. The TusBCD complex interacts with TusE.

It localises to the cytoplasm. Its function is as follows. Part of a sulfur-relay system required for 2-thiolation of 5-methylaminomethyl-2-thiouridine (mnm(5)s(2)U) at tRNA wobble positions. The polypeptide is Protein TusB (Shigella dysenteriae serotype 1 (strain Sd197)).